We begin with the raw amino-acid sequence, 389 residues long: Nicotinate phosphoribosyltransferase (389 aa).

Position 216 is a phosphohistidine; by autocatalysis (His216).

It belongs to the NAPRTase family. In terms of processing, transiently phosphorylated on a His residue during the reaction cycle. Phosphorylation strongly increases the affinity for substrates and increases the rate of nicotinate D-ribonucleotide production. Dephosphorylation regenerates the low-affinity form of the enzyme, leading to product release.

It carries out the reaction nicotinate + 5-phospho-alpha-D-ribose 1-diphosphate + ATP + H2O = nicotinate beta-D-ribonucleotide + ADP + phosphate + diphosphate. The protein operates within cofactor biosynthesis; NAD(+) biosynthesis; nicotinate D-ribonucleotide from nicotinate: step 1/1. Catalyzes the synthesis of beta-nicotinate D-ribonucleotide from nicotinate and 5-phospho-D-ribose 1-phosphate at the expense of ATP. This is Nicotinate phosphoribosyltransferase from Ralstonia pickettii (strain 12J).